The primary structure comprises 451 residues: Phosphoglucosamine mutase (451 aa).

The active-site Phosphoserine intermediate is S102. Mg(2+)-binding residues include S102, D244, D246, and D248. Residue S102 is modified to Phosphoserine.

The protein belongs to the phosphohexose mutase family. Mg(2+) serves as cofactor. Post-translationally, activated by phosphorylation.

It catalyses the reaction alpha-D-glucosamine 1-phosphate = D-glucosamine 6-phosphate. Catalyzes the conversion of glucosamine-6-phosphate to glucosamine-1-phosphate. This is Phosphoglucosamine mutase from Lawsonia intracellularis (strain PHE/MN1-00).